The primary structure comprises 557 residues: Probable protein kinase UbiB (557 aa).

The region spanning 121–509 is the Protein kinase domain; sequence SFDTVPLASA…RKLQTRVVTA (389 aa). Residues 127-135 and Lys154 contribute to the ATP site; that span reads LASASIAQV. Asp289 acts as the Proton acceptor in catalysis. The next 2 membrane-spanning stretches (helical) occupy residues 506-526 and 535-555; these read VVTA…YGLH and VPVW…VAWL.

It belongs to the ABC1 family. UbiB subfamily.

It is found in the cell inner membrane. The protein operates within cofactor biosynthesis; ubiquinone biosynthesis [regulation]. Its function is as follows. Is probably a protein kinase regulator of UbiI activity which is involved in aerobic coenzyme Q (ubiquinone) biosynthesis. In Xanthomonas oryzae pv. oryzae (strain MAFF 311018), this protein is Probable protein kinase UbiB.